Here is a 329-residue protein sequence, read N- to C-terminus: MFVSVGITASLTTILAAPVLTWVWANHLEPNLLRVTRLNWNLPKKFAHLHGLRIVQISDLHLNHSTPDAFLKKVSRKISSLSPDILVFTGDFVCRAKVETPERLKHFLCSLHAPLGCFACLGNHDYATYVSRDIHGKINTISAMNSRPLKRAFTSVYQSLFASSRNEFADTLNPQIPNPHLVSILRNTPFQLLHNQSATLSDTINIVGLGDFFAKQFDPKKAFTDYNPTLPGIILSHNPDTIHHLQDYPGDVVFSGHSHGPQISLPWPKFANTITNKLSGLENPELARGLFSFPEESRLLYVNRGLGGWKRIRFCSPPEICLMRCLYEP.

A helical transmembrane segment spans residues 2-24 (FVSVGITASLTTILAAPVLTWVW). A divalent metal cation contacts are provided by aspartate 59, histidine 61, aspartate 91, asparagine 123, histidine 257, and histidine 259.

It belongs to the metallophosphoesterase superfamily. LpxG family. It depends on Mn(2+) as a cofactor.

It localises to the cell inner membrane. The enzyme catalyses UDP-2,3-diacyl-alpha-D-glucosamine + H2O = 2,3-diacyl-alpha-D-glucosaminyl 1-phosphate + UMP + 2 H(+). Its pathway is glycolipid biosynthesis; lipid IV(A) biosynthesis. In terms of biological role, hydrolyzes the pyrophosphate bond of UDP-2,3-diacylglucosamine to form 2,3-diacylglucosamine 1-phosphate (lipid X) and UMP by catalyzing the attack of water at the alpha-P atom. Involved in the biosynthesis of lipid A, a phosphorylated glycolipid that anchors the lipooligosaccharide (LOS) to the outer membrane of the cell. Can functionally complement lpxH deficiency in E.coli. Overexpression of LpxG results in toxic accumulation of lipid X and profoundly reduces the infectivity of C.trachomatis. Can utilize UDP-2-N,3-O-bis((3R)-3-hydroxytetradecanoyl)-alpha-D-glucosamine as substrate in vitro, but the substrate is likely UDP-2-N-((3R)-3-hydroxyicosanoyl),3-O-(tetradecanoyl)-alpha-D-glucosamine in vivo. This Chlamydia trachomatis serovar D (strain ATCC VR-885 / DSM 19411 / UW-3/Cx) protein is UDP-2,3-diacylglucosamine pyrophosphatase LpxG.